Here is a 61-residue protein sequence, read N- to C-terminus: Small ribosomal subunit protein uS14 (61 aa).

Positions 24, 27, 40, and 43 each coordinate Zn(2+).

Belongs to the universal ribosomal protein uS14 family. Zinc-binding uS14 subfamily. Part of the 30S ribosomal subunit. Contacts proteins S3 and S10. Zn(2+) is required as a cofactor.

In terms of biological role, binds 16S rRNA, required for the assembly of 30S particles and may also be responsible for determining the conformation of the 16S rRNA at the A site. The sequence is that of Small ribosomal subunit protein uS14 from Herpetosiphon aurantiacus (strain ATCC 23779 / DSM 785 / 114-95).